A 779-amino-acid polypeptide reads, in one-letter code: MFTNWRIFAVNRQKTFSVHIHTTCYCKIKANLKRSKTQVPLTRSYSSPPGIVGNEVKSLHSIINPPVAKIRNIGIMAHIDAGKTTTTERILYYSGYTRSLGDVDDGDTVTDFMAQERERGITIQSAAVTLDWKGYRVNLIDTPGHVDFTLEVERCLRVLDGAVAVFDASAGVEAQTLTVWRQADKHKIPRICFLNKMDKTGASFNYAVESIREKLKAKPLILQLPIGEARTFQGVVDVVNREKLIWNSDSDDGKDFERKPLSEASDPTLLKETVEARNSLIEQVADLDDEFADLVLGEFSEDFDLVPAEKLQAAIHRVTLAQAAVPVLCGSALKNKGVQPLLDAVTTYLPSPEEREHGFLQWYKGDLCALAFKVLHDKQRGPLVFLRIYSGTLTPQSAVHNVNRNCTERMSRLLLPFADQHVEIPSLTAGNIALTVGLKQTATGDTIVSSKSSALAAARRAGKGERKPGRISEAESVLLAGVEIPEPVFFCTIEPPSAAKQPDLDHALEHLQREDPSLKVKLDPDSGQTVLCGMGELHIEIIHDRIKREYGLETYLGPLQVAYRETILNSVRATDTLDRVLGDKRHFARAELEVRPAEEPCGVATIEYADSVGEDMLQAPREDIENAIHSACLQGPLLGSPIQDVAVTLHSLMIHPGTSTTMVTACISRCVQKALKKADKQVLEPLMSLEVTVSREYLSPVLADLAQRRGNIQEIQTRQDNKVVLGFVPLAEIMGYSTVLRTLTSGSATFALELSTYQAMSPQDQRTLLSQRSGLARVL.

One can recognise a tr-type G domain in the interval 68–353 (AKIRNIGIMA…AVTTYLPSPE (286 aa)). GTP contacts are provided by residues 77 to 84 (AHIDAGKT), 141 to 145 (DTPGH), and 195 to 198 (NKMD).

It belongs to the TRAFAC class translation factor GTPase superfamily. Classic translation factor GTPase family. EF-G/EF-2 subfamily.

The protein localises to the mitochondrion. The catalysed reaction is GTP + H2O = GDP + phosphate + H(+). Its function is as follows. Mitochondrial GTPase that mediates the disassembly of ribosomes from messenger RNA at the termination of mitochondrial protein biosynthesis. Acts in collaboration with MRRF. GTP hydrolysis follows the ribosome disassembly and probably occurs on the ribosome large subunit. Not involved in the GTP-dependent ribosomal translocation step during translation elongation. In Rattus norvegicus (Rat), this protein is Ribosome-releasing factor 2, mitochondrial (Gfm2).